A 695-amino-acid chain; its full sequence is DNA ligase (695 aa).

Residues 44 to 48 (DAEYD), 93 to 94 (SL), and Glu124 contribute to the NAD(+) site. The active-site N6-AMP-lysine intermediate is the Lys126. NAD(+) contacts are provided by Arg147, Glu187, Lys304, and Lys328. Residues Cys422, Cys425, Cys440, and Cys445 each contribute to the Zn(2+) site. In terms of domain architecture, BRCT spans 606-695 (TVQGPLAGKT…GIEVEAAARS (90 aa)).

This sequence belongs to the NAD-dependent DNA ligase family. LigA subfamily. It depends on Mg(2+) as a cofactor. The cofactor is Mn(2+).

It carries out the reaction NAD(+) + (deoxyribonucleotide)n-3'-hydroxyl + 5'-phospho-(deoxyribonucleotide)m = (deoxyribonucleotide)n+m + AMP + beta-nicotinamide D-nucleotide.. Its function is as follows. DNA ligase that catalyzes the formation of phosphodiester linkages between 5'-phosphoryl and 3'-hydroxyl groups in double-stranded DNA using NAD as a coenzyme and as the energy source for the reaction. It is essential for DNA replication and repair of damaged DNA. The protein is DNA ligase of Thermomicrobium roseum (strain ATCC 27502 / DSM 5159 / P-2).